A 96-amino-acid chain; its full sequence is Transcriptional regulator ATRY (96 aa).

Residues 1–12 (VICTACGQQVNQ) form a GATA-type; atypical zinc finger. The ADD domain maps to 1-96 (VICTACGQQV…IAVCDSVLEN (96 aa)). A PHD-type; atypical zinc finger spans residues 27–82 (LICKRWCAEGGNLICCDSCHNAFCKKCIWRNLGRKEISKIMNEKNEWHCYICCPEP).

The protein belongs to the SNF2/RAD54 helicase family. In terms of tissue distribution, expressed in developing and adult testis. Also weakly expressed in prostate and epididymis.

The protein resides in the nucleus. It catalyses the reaction ATP + H2O = ADP + phosphate + H(+). Its function is as follows. Could be a global transcriptional regulator. Modifies gene expression by affecting chromatin. This chain is Transcriptional regulator ATRY (ATRY), found in Notamacropus eugenii (Tammar wallaby).